A 124-amino-acid polypeptide reads, in one-letter code: Small ribosomal subunit protein bS6 (124 aa).

The segment at 96-124 (ETAPSPMMKEVQREEARKAAQTTTEGQPA) is disordered. Over residues 115-124 (AQTTTEGQPA) the composition is skewed to polar residues.

The protein belongs to the bacterial ribosomal protein bS6 family.

Its function is as follows. Binds together with bS18 to 16S ribosomal RNA. The sequence is that of Small ribosomal subunit protein bS6 from Cupriavidus metallidurans (strain ATCC 43123 / DSM 2839 / NBRC 102507 / CH34) (Ralstonia metallidurans).